The primary structure comprises 683 residues: Eukaryotic translation initiation factor 3 subunit B (683 aa).

Residues 1–25 (MAKKKGEEQDFEEEPNFDDPEGFVD) form a disordered region. Residues 9–25 (QDFEEEPNFDDPEGFVD) show a composition bias toward acidic residues. Residues 49–133 (NVIVVDNIPV…YTLLVNRFAD (85 aa)) form the RRM domain. WD repeat units lie at residues 199-238 (KRER…KVNK), 240-279 (AHSN…EKRT), 283-321 (DGMS…LLDM), 324-359 (IRVE…TLMA), 435-477 (EVKE…EPVL), and 522-567 (GDHY…KRVN). Residues 611 to 638 (MTRASKELIEKRAKLREQFTEYRSKRVK) are a coiled coil.

This sequence belongs to the eIF-3 subunit B family. As to quaternary structure, component of the eukaryotic translation initiation factor 3 (eIF-3) complex.

The protein resides in the cytoplasm. Its function is as follows. RNA-binding component of the eukaryotic translation initiation factor 3 (eIF-3) complex, which is involved in protein synthesis of a specialized repertoire of mRNAs and, together with other initiation factors, stimulates binding of mRNA and methionyl-tRNAi to the 40S ribosome. The eIF-3 complex specifically targets and initiates translation of a subset of mRNAs involved in cell proliferation. This Anopheles gambiae (African malaria mosquito) protein is Eukaryotic translation initiation factor 3 subunit B.